Reading from the N-terminus, the 253-residue chain is Type III pantothenate kinase (253 aa).

An ATP-binding site is contributed by 6–13 (DVGNTNTV). 103-106 (GADR) lines the substrate pocket. Asp-105 acts as the Proton acceptor in catalysis. Asp-125 contributes to the K(+) binding site. Residue Thr-128 coordinates ATP. Thr-180 provides a ligand contact to substrate.

It belongs to the type III pantothenate kinase family. As to quaternary structure, homodimer. NH4(+) serves as cofactor. It depends on K(+) as a cofactor.

It is found in the cytoplasm. The enzyme catalyses (R)-pantothenate + ATP = (R)-4'-phosphopantothenate + ADP + H(+). The protein operates within cofactor biosynthesis; coenzyme A biosynthesis; CoA from (R)-pantothenate: step 1/5. Functionally, catalyzes the phosphorylation of pantothenate (Pan), the first step in CoA biosynthesis. This chain is Type III pantothenate kinase, found in Parafrankia sp. (strain EAN1pec).